The chain runs to 501 residues: Cilia- and flagella-associated protein 45 (501 aa).

A coiled-coil region spans residues 75–114 (MTAEDVAAAKREAEAKREQLQAVSKARKEKMLKLEEEAKK).

This sequence belongs to the CFAP45 family.

It is found in the cell projection. Its subcellular location is the cilium. The protein localises to the flagellum. This Chlamydomonas reinhardtii (Chlamydomonas smithii) protein is Cilia- and flagella-associated protein 45.